We begin with the raw amino-acid sequence, 337 residues long: uncharacterized protein (337 aa).

An F-box domain is found at 22–76 (PFRLLSLPTLALKNVLLHIDFIDLLELSLASKKCEIYMKTCCLKIDSLHFHFRRI).

This is an uncharacterized protein from Caenorhabditis elegans.